The chain runs to 127 residues: Small ribosomal subunit protein uS11 (127 aa).

It belongs to the universal ribosomal protein uS11 family. Part of the 30S ribosomal subunit. Interacts with proteins S7 and S18. Binds to IF-3.

Its function is as follows. Located on the platform of the 30S subunit, it bridges several disparate RNA helices of the 16S rRNA. Forms part of the Shine-Dalgarno cleft in the 70S ribosome. This chain is Small ribosomal subunit protein uS11, found in Rickettsia prowazekii (strain Madrid E).